The following is a 314-amino-acid chain: Polyamine aminopropyltransferase (314 aa).

Residues 13 to 249 form the PABS domain; that stretch reads WSWFLEWLTP…SMWGFVVASD (237 aa). Gln42 contributes to the S-methyl-5'-thioadenosine binding site. The spermidine site is built by His73 and Glu97. S-methyl-5'-thioadenosine is bound by residues Asp117 and 149 to 150; that span reads DA. Catalysis depends on Asp168, which acts as the Proton acceptor. Pro177 contacts S-methyl-5'-thioadenosine.

This sequence belongs to the spermidine/spermine synthase family. In terms of assembly, homodimer or homotetramer.

Its subcellular location is the cytoplasm. The catalysed reaction is S-adenosyl 3-(methylsulfanyl)propylamine + putrescine = S-methyl-5'-thioadenosine + spermidine + H(+). It functions in the pathway amine and polyamine biosynthesis; spermidine biosynthesis; spermidine from putrescine: step 1/1. Functionally, catalyzes the irreversible transfer of a propylamine group from the amino donor S-adenosylmethioninamine (decarboxy-AdoMet) to putrescine (1,4-diaminobutane) to yield spermidine. In Aeropyrum pernix (strain ATCC 700893 / DSM 11879 / JCM 9820 / NBRC 100138 / K1), this protein is Polyamine aminopropyltransferase.